Here is a 260-residue protein sequence, read N- to C-terminus: 3'-5' ssDNA/RNA exonuclease TatD (260 aa).

A divalent metal cation-binding residues include glutamate 91, histidine 127, and histidine 152.

Belongs to the metallo-dependent hydrolases superfamily. TatD-type hydrolase family. TatD subfamily. Monomer. Mg(2+) serves as cofactor.

It is found in the cytoplasm. Its function is as follows. 3'-5' exonuclease that prefers single-stranded DNA and RNA. May play a role in the H(2)O(2)-induced DNA damage repair. This is 3'-5' ssDNA/RNA exonuclease TatD from Enterobacter sp. (strain 638).